Reading from the N-terminus, the 203-residue chain is Endo-type membrane-bound lytic murein transglycosylase A (203 aa).

An N-terminal signal peptide occupies residues 1 to 15 (MKLRWLLILVVFLAG). Residue cysteine 16 is the site of N-palmitoyl cysteine attachment. Cysteine 16 carries the S-diacylglycerol cysteine lipid modification.

This sequence belongs to the transglycosylase Slt family.

Its subcellular location is the cell outer membrane. It catalyses the reaction Endolytic cleavage of the (1-&gt;4)-beta-glycosidic linkage between N-acetylmuramic acid (MurNAc) and N-acetylglucosamine (GlcNAc) residues in peptidoglycan with concomitant formation of a 1,6-anhydrobond in the MurNAc residue.. In terms of biological role, murein-degrading enzyme. May play a role in recycling of muropeptides during cell elongation and/or cell division. Preferentially cleaves at a distance of more than two disaccharide units from the ends of the glycan chain. This chain is Endo-type membrane-bound lytic murein transglycosylase A, found in Klebsiella pneumoniae subsp. pneumoniae (strain ATCC 700721 / MGH 78578).